The chain runs to 252 residues: Small ribosomal subunit protein uS2 (252 aa).

Belongs to the universal ribosomal protein uS2 family.

The chain is Small ribosomal subunit protein uS2 from Ruminiclostridium cellulolyticum (strain ATCC 35319 / DSM 5812 / JCM 6584 / H10) (Clostridium cellulolyticum).